A 311-amino-acid polypeptide reads, in one-letter code: Olfactory receptor 1073 (311 aa).

The Extracellular portion of the chain corresponds to 1–25; the sequence is MKQQNDTQILQFLLLGLSENTELQP. Residue Asn-5 is glycosylated (N-linked (GlcNAc...) asparagine). The chain crosses the membrane as a helical span at residues 26–46; sequence LIYWLFFSMYLVTVWGNLIII. Over 47 to 57 the chain is Cytoplasmic; sequence LATVLDFRLHT. Residues 58–78 traverse the membrane as a helical segment; sequence AMYFFLCNLSFVDICLISTTI. Residues 79–97 are Extracellular-facing; it reads PKMLANVHLNHKAITYEGC. Cys-97 and Cys-179 are disulfide-bonded. The chain crosses the membrane as a helical span at residues 98–118; sequence IMQIYFFTLFVGLDNFLLAVM. The Cytoplasmic segment spans residues 119–133; the sequence is AYDRFVAICHPLRYT. A helical transmembrane segment spans residues 134–154; the sequence is SIMTPHLCMSLVLVSWIASVL. Asn-155 is a glycosylation site (N-linked (GlcNAc...) asparagine). Over 155 to 196 the chain is Extracellular; it reads NSSLQSFLVLQLSFCTEVEIPHFFCELSMLVHLACSDTFLSD. A helical membrane pass occupies residues 197–217; that stretch reads MAMNVLAALLGGGCLVGILYS. At 218-244 the chain is on the cytoplasmic side; sequence YSKIVSSIQAISSAEGKYKAFSTCVSH. The helical transmembrane segment at 245–265 threads the bilayer; it reads LSVVSLFYCTLLGVYLSSAVT. Over 266–271 the chain is Extracellular; it reads QNSHST. The chain crosses the membrane as a helical span at residues 272–292; it reads AATSLMYTVVTPMLNPFIYSL. The Cytoplasmic portion of the chain corresponds to 293-311; sequence RNDNIKRALKNFVKKKLEK.

It belongs to the G-protein coupled receptor 1 family. Tongue specific.

Its subcellular location is the cell membrane. Functionally, possible taste receptor. The sequence is that of Olfactory receptor 1073 (Olr1073) from Rattus norvegicus (Rat).